The primary structure comprises 559 residues: U-box domain-containing protein 41 (559 aa).

Disordered stretches follow at residues 1–30 (MGGN…KHDE) and 121–156 (RMDK…SPSD). Polar residues predominate over residues 12 to 24 (HQRSSSATTTTLP). A U-box domain is found at 30–104 (ETPPEFLCPI…FSWCDRQKVD (75 aa)). ARM repeat units lie at residues 266 to 305 (EDLR…NLSL), 307 to 346 (KQNK…SLAL), 348 to 388 (DENK…HLSL), 390 to 427 (PSNR…NLAA), and 428 to 472 (CPDG…TLCQ).

It carries out the reaction S-ubiquitinyl-[E2 ubiquitin-conjugating enzyme]-L-cysteine + [acceptor protein]-L-lysine = [E2 ubiquitin-conjugating enzyme]-L-cysteine + N(6)-ubiquitinyl-[acceptor protein]-L-lysine.. It functions in the pathway protein modification; protein ubiquitination. In terms of biological role, functions as an E3 ubiquitin ligase. The protein is U-box domain-containing protein 41 (PUB41) of Arabidopsis thaliana (Mouse-ear cress).